The sequence spans 175 residues: METWRKGSFRNASFFKRITLGRPRRLHRQGSILSQASTAGGDHEEYSNREVIRELQGRPDGRRLPLWGDEHPRATLLAPPKPPRLYRESSSCPNILEPPASYTAGYSATLPSAISLTGPLHQCSEEALSDTPHFPRTPTPDLSDPFLSFKVDLGLSLLEEVLQILKEQFPSEPHF.

Residues 1-11 constitute a mitochondrion transit peptide; the sequence is METWRKGSFRN. Positions 29–48 are disordered; it reads QGSILSQASTAGGDHEEYSN.

It localises to the mitochondrion. This is an uncharacterized protein from Mus musculus (Mouse).